We begin with the raw amino-acid sequence, 705 residues long: Polyribonucleotide nucleotidyltransferase (705 aa).

Mg(2+) contacts are provided by aspartate 487 and aspartate 493. In terms of domain architecture, KH spans 554 to 613 (PKILTMSINPDKIRDVIGPSGKQINKIIEDTGVKIDIEQDGTIFISSTDESMNQKAKKII). The 69-residue stretch at 623–691 (GQLYLGKVKR…KQGRVNLSRK (69 aa)) folds into the S1 motif domain.

It belongs to the polyribonucleotide nucleotidyltransferase family. It depends on Mg(2+) as a cofactor.

The protein resides in the cytoplasm. It catalyses the reaction RNA(n+1) + phosphate = RNA(n) + a ribonucleoside 5'-diphosphate. Its function is as follows. Involved in mRNA degradation. Catalyzes the phosphorolysis of single-stranded polyribonucleotides processively in the 3'- to 5'-direction. The protein is Polyribonucleotide nucleotidyltransferase of Bacillus licheniformis (strain ATCC 14580 / DSM 13 / JCM 2505 / CCUG 7422 / NBRC 12200 / NCIMB 9375 / NCTC 10341 / NRRL NRS-1264 / Gibson 46).